A 287-amino-acid polypeptide reads, in one-letter code: Hydroxysteroid 11-beta-dehydrogenase 1-like protein (287 aa).

The first 22 residues, 1–22 (MKLYAKLLLCSICVAFIAVRWS), serve as a signal peptide directing secretion. Residues 40–66 (GAST…TARR), 91–92 (DM), and 118–120 (NHI) contribute to the NADP(+) site. S169 serves as a coordination point for substrate. Y182 (proton acceptor) is an active-site residue. NADP(+) contacts are provided by residues 182-186 (YASTK) and 215-221 (GLIDTDS).

This sequence belongs to the short-chain dehydrogenases/reductases (SDR) family.

It is found in the secreted. The enzyme catalyses cortisone + NADPH + H(+) = cortisol + NADP(+). In terms of biological role, unidirectional NADP(+)-dependent cortisol dehydrogenase (in vitro). The sequence is that of Hydroxysteroid 11-beta-dehydrogenase 1-like protein (hsd11b1l) from Danio rerio (Zebrafish).